The sequence spans 359 residues: Peptide chain release factor 1 (359 aa).

Glutamine 235 is subject to N5-methylglutamine. The disordered stretch occupies residues 280–306 (AERQRADSERSADRKSQVGSGDRSERI).

Belongs to the prokaryotic/mitochondrial release factor family. Post-translationally, methylated by PrmC. Methylation increases the termination efficiency of RF1.

Its subcellular location is the cytoplasm. Peptide chain release factor 1 directs the termination of translation in response to the peptide chain termination codons UAG and UAA. This chain is Peptide chain release factor 1, found in Rhizobium leguminosarum bv. trifolii (strain WSM2304).